We begin with the raw amino-acid sequence, 359 residues long: 3-dehydroquinate synthase (359 aa).

Residues 71–76 (DGEQFK), 105–109 (GVIGD), 129–130 (TT), lysine 142, lysine 151, and 169–172 (CLQT) each bind NAD(+). Residues glutamate 184, histidine 247, and histidine 264 each contribute to the Zn(2+) site.

This sequence belongs to the sugar phosphate cyclases superfamily. Dehydroquinate synthase family. The cofactor is Co(2+). Zn(2+) is required as a cofactor. NAD(+) serves as cofactor.

The protein localises to the cytoplasm. It catalyses the reaction 7-phospho-2-dehydro-3-deoxy-D-arabino-heptonate = 3-dehydroquinate + phosphate. It functions in the pathway metabolic intermediate biosynthesis; chorismate biosynthesis; chorismate from D-erythrose 4-phosphate and phosphoenolpyruvate: step 2/7. In terms of biological role, catalyzes the conversion of 3-deoxy-D-arabino-heptulosonate 7-phosphate (DAHP) to dehydroquinate (DHQ). The polypeptide is 3-dehydroquinate synthase (Shewanella sp. (strain MR-4)).